The following is a 473-amino-acid chain: Sarcalumenin (473 aa).

A signal peptide spans 1–20; it reads MRALVLLGCLLASLLFSGQA. One can recognise a Dynamin-type G domain in the interval 90–331; it reads ITSKPMVLFL…IENRLENKIA (242 aa). The G1 motif stretch occupies residues 100–107; sequence GPWSVGKS. Positions 128 to 129 are G2 motif; sequence EP. Residues 190-193 form a G3 motif region; sequence DTPG. Residues 255-258 are G4 motif; that stretch reads NKAD. Residue P278 is a region of interest, G5 motif. 2 N-linked (GlcNAc...) asparagine glycosylation sites follow: N281 and N389.

It belongs to the TRAFAC class dynamin-like GTPase superfamily. Dynamin/Fzo/YdjA family. Post-translationally, N-glycosylated.

It localises to the sarcoplasmic reticulum lumen. It is found in the sarcoplasmic reticulum membrane. This is Sarcalumenin (SRL) from Homo sapiens (Human).